The sequence spans 465 residues: 28S rRNA (cytosine-C(5))-methyltransferase (465 aa).

G2 is modified (N-acetylglycine). S167 carries the phosphoserine modification. S-adenosyl-L-methionine-binding positions include 234-240, D258, R263, and D305; that span reads CAAPGNK. Residue C359 is the Nucleophile of the active site. The segment at 430-465 is disordered; sequence TPAPQTDAMDPEPLSQVPKRKRRRKAAVGASMQPST.

This sequence belongs to the class I-like SAM-binding methyltransferase superfamily. RsmB/NOP family. In the hippocampus, specifically expressed in adult hippocampal NG2-positive oligodendrocyte precursor cells (at protein level).

It localises to the nucleus. The protein resides in the nucleolus. It carries out the reaction a cytidine in 28S rRNA + S-adenosyl-L-methionine = a 5-methylcytidine in 28S rRNA + S-adenosyl-L-homocysteine + H(+). Its function is as follows. S-adenosyl-L-methionine-dependent methyltransferase that specifically methylates the C(5) position of cytosine 3438 (m5C3438) in 28S rRNA. m5C3782 promotes protein translation without affecting ribosome biogenesis and fidelity. Required for corpus callosum and cerebral cortex development. This Mus musculus (Mouse) protein is 28S rRNA (cytosine-C(5))-methyltransferase.